We begin with the raw amino-acid sequence, 468 residues long: MAIMHIRTRFAPSPTGFIHLGNLRSALYPWAFARHNKGDFILRIEDTDLERSSQEAVDVIIEGMAWLGMDIDEGPIYQMQRIDRYRAVIKEMVEAGLAYPCYMSEDELNKLRDQQMANKEKPRYNGLWRPEPGKDLPPIPEGVLPVIRFKNPIGGSVIWNDAVKGQIEISNDELDDLVIARPDGTPTYNFCVVVDDLDMKITHVIRGDDHVNNTPRQINIMKALGGSPPVYAHLPTVLNDLGEKMSKRNGAMSVRDYQKAGYLPDAILNYLARLGWSHGDAEVFTKEQFVDWFELDSLGRSPAQHNPEKLLWLNHQYIQNADAAKLAEACKPFAHQLGIDTENGPNFIQVVGLLKDRANTLIEIAEGAKLFYATAPNLTKDQITENISEAIVPALKDLIEALKNADGTKESYSAAFKQVLAQHQIKMPALAMPVRYALFATTQTPAIDAVLVVLGKEEAINRLSKVVV.

The 'HIGH' region motif lies at 12-22; that stretch reads PSPTGFIHLGN. The short motif at 244–248 is the 'KMSKS' region element; it reads KMSKR. Residue Lys247 participates in ATP binding.

Belongs to the class-I aminoacyl-tRNA synthetase family. Glutamate--tRNA ligase type 1 subfamily. As to quaternary structure, monomer.

The protein resides in the cytoplasm. It catalyses the reaction tRNA(Glu) + L-glutamate + ATP = L-glutamyl-tRNA(Glu) + AMP + diphosphate. In terms of biological role, catalyzes the attachment of glutamate to tRNA(Glu) in a two-step reaction: glutamate is first activated by ATP to form Glu-AMP and then transferred to the acceptor end of tRNA(Glu). The polypeptide is Glutamate--tRNA ligase (Polynucleobacter asymbioticus (strain DSM 18221 / CIP 109841 / QLW-P1DMWA-1) (Polynucleobacter necessarius subsp. asymbioticus)).